A 337-amino-acid polypeptide reads, in one-letter code: Mitochondrial glutathione transporter SLC25A40 (337 aa).

Solcar repeat units lie at residues 14–132 (VTPL…LSAF), 140–224 (NETR…LKRW), and 234–328 (PTFM…GKSF). Helical transmembrane passes span 20-40 (MIAS…LDVV), 104-124 (LWSG…IYFT), 146-166 (IVAG…LELI), 200-221 (WAPT…YENL), 240-260 (FTSG…FDVV), and 299-319 (GLFT…AIMI).

It belongs to the mitochondrial carrier (TC 2.A.29) family.

It localises to the mitochondrion inner membrane. It catalyses the reaction glutathione(in) = glutathione(out). In terms of biological role, probable mitochondrial transporter required for glutathione import into mitochondria. Glutathione, which plays key roles in oxidative metabolism, is produced exclusively in the cytosol and is imported in many organelles. Mitochondrial glutathione is required for the activity and stability of proteins containing iron-sulfur clusters, as well as erythropoiesis. In Mus musculus (Mouse), this protein is Mitochondrial glutathione transporter SLC25A40.